Reading from the N-terminus, the 343-residue chain is Holliday junction branch migration complex subunit RuvB (343 aa).

A large ATPase domain (RuvB-L) region spans residues T4–Y193. ATP-binding positions include L32, R33, G74, K77, T78, T79, E140–Y142, R183, Y193, and R230. T78 is a binding site for Mg(2+). The small ATPAse domain (RuvB-S) stretch occupies residues E194–D264. Residues V267–K343 are head domain (RuvB-H). R322 and R327 together coordinate DNA.

This sequence belongs to the RuvB family. Homohexamer. Forms an RuvA(8)-RuvB(12)-Holliday junction (HJ) complex. HJ DNA is sandwiched between 2 RuvA tetramers; dsDNA enters through RuvA and exits via RuvB. An RuvB hexamer assembles on each DNA strand where it exits the tetramer. Each RuvB hexamer is contacted by two RuvA subunits (via domain III) on 2 adjacent RuvB subunits; this complex drives branch migration. In the full resolvosome a probable DNA-RuvA(4)-RuvB(12)-RuvC(2) complex forms which resolves the HJ.

Its subcellular location is the cytoplasm. The catalysed reaction is ATP + H2O = ADP + phosphate + H(+). The RuvA-RuvB-RuvC complex processes Holliday junction (HJ) DNA during genetic recombination and DNA repair, while the RuvA-RuvB complex plays an important role in the rescue of blocked DNA replication forks via replication fork reversal (RFR). RuvA specifically binds to HJ cruciform DNA, conferring on it an open structure. The RuvB hexamer acts as an ATP-dependent pump, pulling dsDNA into and through the RuvAB complex. RuvB forms 2 homohexamers on either side of HJ DNA bound by 1 or 2 RuvA tetramers; 4 subunits per hexamer contact DNA at a time. Coordinated motions by a converter formed by DNA-disengaged RuvB subunits stimulates ATP hydrolysis and nucleotide exchange. Immobilization of the converter enables RuvB to convert the ATP-contained energy into a lever motion, pulling 2 nucleotides of DNA out of the RuvA tetramer per ATP hydrolyzed, thus driving DNA branch migration. The RuvB motors rotate together with the DNA substrate, which together with the progressing nucleotide cycle form the mechanistic basis for DNA recombination by continuous HJ branch migration. Branch migration allows RuvC to scan DNA until it finds its consensus sequence, where it cleaves and resolves cruciform DNA. The protein is Holliday junction branch migration complex subunit RuvB of Neisseria meningitidis serogroup A / serotype 4A (strain DSM 15465 / Z2491).